The sequence spans 156 residues: Zinc metalloproteinase-disintegrin jararin (156 aa).

Residues 1 to 67 form the Peptidase M12B domain; that stretch reads FVANRMAHEL…NYYGCLLNEP (67 aa). His-8 provides a ligand contact to Zn(2+). The active site involves Glu-9. His-12 is a binding site for Zn(2+). 9 disulfides stabilise this stretch: Cys-23–Cys-47, Cys-25–Cys-30, Cys-78–Cys-97, Cys-89–Cys-107, Cys-91–Cys-102, Cys-101–Cys-124, Cys-115–Cys-121, Cys-120–Cys-145, and Cys-133–Cys-152. A Disintegrin domain is found at 75 to 156; that stretch reads PPFCGNYYPE…GQSGDCPRNS (82 aa). A compositionally biased stretch (basic and acidic residues) spans 136–145; it reads GRGDNPDDRC. Residues 136-156 are disordered; that stretch reads GRGDNPDDRCTGQSGDCPRNS. Residues 137–139 carry the Cell attachment site motif; sequence RGD. Over residues 146–156 the composition is skewed to polar residues; that stretch reads TGQSGDCPRNS.

This sequence belongs to the venom metalloproteinase (M12B) family. P-II subfamily. P-IIb sub-subfamily. As to quaternary structure, monomer. Requires Zn(2+) as cofactor. As to expression, expressed by the venom gland.

It is found in the secreted. Functionally, snake venom zinc metalloproteinase that inhibits ADP-induced platelet aggregation (probably by binding integrin alpha-IIb/beta-3 (ITGA2B/ITGB3)) and degrades fibrinogen. This is Zinc metalloproteinase-disintegrin jararin from Bothrops jararaca (Jararaca).